Consider the following 469-residue polypeptide: UDP-N-acetylmuramoylalanine--D-glutamate ligase (469 aa).

Gly121–Thr127 contacts ATP.

This sequence belongs to the MurCDEF family.

Its subcellular location is the cytoplasm. It carries out the reaction UDP-N-acetyl-alpha-D-muramoyl-L-alanine + D-glutamate + ATP = UDP-N-acetyl-alpha-D-muramoyl-L-alanyl-D-glutamate + ADP + phosphate + H(+). Its pathway is cell wall biogenesis; peptidoglycan biosynthesis. In terms of biological role, cell wall formation. Catalyzes the addition of glutamate to the nucleotide precursor UDP-N-acetylmuramoyl-L-alanine (UMA). The chain is UDP-N-acetylmuramoylalanine--D-glutamate ligase from Agrobacterium fabrum (strain C58 / ATCC 33970) (Agrobacterium tumefaciens (strain C58)).